Reading from the N-terminus, the 441-residue chain is ATP-dependent protease ATPase subunit HslU (441 aa).

Residues I18, 60–65, D254, E319, and R391 contribute to the ATP site; that span reads GVGKTE.

Belongs to the ClpX chaperone family. HslU subfamily. In terms of assembly, a double ring-shaped homohexamer of HslV is capped on each side by a ring-shaped HslU homohexamer. The assembly of the HslU/HslV complex is dependent on binding of ATP.

Its subcellular location is the cytoplasm. ATPase subunit of a proteasome-like degradation complex; this subunit has chaperone activity. The binding of ATP and its subsequent hydrolysis by HslU are essential for unfolding of protein substrates subsequently hydrolyzed by HslV. HslU recognizes the N-terminal part of its protein substrates and unfolds these before they are guided to HslV for hydrolysis. The chain is ATP-dependent protease ATPase subunit HslU from Shewanella halifaxensis (strain HAW-EB4).